The following is a 72-amino-acid chain: Bradykinin-potentiating peptide BmKbpp (72 aa).

The signal sequence occupies residues 1 to 22; sequence MNKKTLLVIFFVTMLIVDEVNS. Residues 70-72 constitute a propeptide that is removed on maturation; that stretch reads RRR.

It belongs to the non-disulfide-bridged peptide (NDBP) superfamily. Long chain multifunctional peptide (group 2) family. In terms of tissue distribution, expressed by the venom gland.

It localises to the secreted. Functionally, amphipathic peptide that shows bradykinin potentiating activity and antimicrobial activities against bacteria and fungi. Has higher antibacterial activities against Gram-negative than against Gram-positive bacteria. Also inhibits NADPH oxidase-dependent superoxide production (IC(50) is 0.4 uM on granulocytes stimulated with PMA, IC(50) is 0.51 uM on HL-60 cells undifferentiated and IC(50) is 0.53 uM on HL-60 cells treated with DMSO). The C-terminal peptide shows a higher bradykinin potentiating activity than the complete peptide. The protein is Bradykinin-potentiating peptide BmKbpp of Olivierus martensii (Manchurian scorpion).